We begin with the raw amino-acid sequence, 1234 residues long: DNA-directed RNA polymerase subunit beta (1234 aa).

The protein belongs to the RNA polymerase beta chain family. In terms of assembly, the RNAP catalytic core consists of 2 alpha, 1 beta, 1 beta' and 1 omega subunit. When a sigma factor is associated with the core the holoenzyme is formed, which can initiate transcription.

The catalysed reaction is RNA(n) + a ribonucleoside 5'-triphosphate = RNA(n+1) + diphosphate. Its function is as follows. DNA-dependent RNA polymerase catalyzes the transcription of DNA into RNA using the four ribonucleoside triphosphates as substrates. The polypeptide is DNA-directed RNA polymerase subunit beta (Clostridium perfringens (strain SM101 / Type A)).